The chain runs to 576 residues: NADH-quinone oxidoreductase subunit C/D (576 aa).

Residues 1–176 (MAWISLEKAK…NLEGLFNYDR (176 aa)) form an NADH dehydrogenase I subunit C region. The tract at residues 200 to 576 (SQIVLNWGPL…IDPVVGETDR (377 aa)) is NADH dehydrogenase I subunit D.

In the N-terminal section; belongs to the complex I 30 kDa subunit family. The protein in the C-terminal section; belongs to the complex I 49 kDa subunit family. NDH-1 is composed of 13 different subunits. Subunits NuoB, CD, E, F, and G constitute the peripheral sector of the complex.

The protein localises to the cell inner membrane. It catalyses the reaction a quinone + NADH + 5 H(+)(in) = a quinol + NAD(+) + 4 H(+)(out). In terms of biological role, NDH-1 shuttles electrons from NADH, via FMN and iron-sulfur (Fe-S) centers, to quinones in the respiratory chain. The immediate electron acceptor for the enzyme in this species is believed to be ubiquinone. Couples the redox reaction to proton translocation (for every two electrons transferred, four hydrogen ions are translocated across the cytoplasmic membrane), and thus conserves the redox energy in a proton gradient. The sequence is that of NADH-quinone oxidoreductase subunit C/D from Sulfurihydrogenibium sp. (strain YO3AOP1).